The following is a 218-amino-acid chain: uncharacterized protein (218 aa).

Belongs to the glycosyltransferase 2 family.

This is an uncharacterized protein from Mycobacterium bovis (strain ATCC BAA-935 / AF2122/97).